The chain runs to 146 residues: Hemoglobin subunit beta-1 (146 aa).

The Globin domain occupies 2-146 (HWTEKERTII…VVSALGKQYH (145 aa)). Heme b is bound by residues His63 and His92.

Belongs to the globin family. As to quaternary structure, hb1 is a heterotetramer of two alpha chains and two beta-1 chains. Red blood cells.

Functionally, involved in oxygen transport from gills to the various peripheral tissues. The polypeptide is Hemoglobin subunit beta-1 (Dissostichus eleginoides (Patagonian toothfish)).